We begin with the raw amino-acid sequence, 75 residues long: Mitotic-spindle organizing protein 1 (75 aa).

This sequence belongs to the MOZART1 family. As to quaternary structure, part of the gamma-tubulin complex.

The protein resides in the cytoplasm. It localises to the cytoskeleton. The protein localises to the microtubule organizing center. Its subcellular location is the centrosome. It is found in the spindle. Required for gamma-tubulin complex recruitment to the centrosome. The polypeptide is Mitotic-spindle organizing protein 1 (mzt1) (Danio rerio (Zebrafish)).